Reading from the N-terminus, the 163-residue chain is Putative 4-hydroxy-4-methyl-2-oxoglutarate aldolase (163 aa).

Residues 75 to 78 (GDQL) and Arg97 each bind substrate. Asp98 is a binding site for a divalent metal cation.

Belongs to the class II aldolase/RraA-like family. In terms of assembly, homotrimer. The cofactor is a divalent metal cation.

It catalyses the reaction 4-hydroxy-4-methyl-2-oxoglutarate = 2 pyruvate. The enzyme catalyses oxaloacetate + H(+) = pyruvate + CO2. Functionally, catalyzes the aldol cleavage of 4-hydroxy-4-methyl-2-oxoglutarate (HMG) into 2 molecules of pyruvate. Also contains a secondary oxaloacetate (OAA) decarboxylase activity due to the common pyruvate enolate transition state formed following C-C bond cleavage in the retro-aldol and decarboxylation reactions. This Photobacterium profundum (strain SS9) protein is Putative 4-hydroxy-4-methyl-2-oxoglutarate aldolase.